Here is a 280-residue protein sequence, read N- to C-terminus: Transcription factor HES-1 (280 aa).

Residues 1–44 are disordered; the sequence is MPADIMEKNSSSPVAATPASVNTTPDKPKTASEHRKSSKPIMEK. The segment covering 10 to 21 has biased composition (low complexity); it reads SSSPVAATPASV. Basic and acidic residues predominate over residues 26–35; sequence DKPKTASEHR. The bHLH domain maps to 34–91; it reads HRKSSKPIMEKRRRARINESLSQLKTLILDALKKDSSRHSKLEKADILEMTVKHLRNL. In terms of domain architecture, Orange spans 110-143; it reads YRAGFSECMNEVTRFLSTCEGVNTEVRTRLLGHL. Disordered regions lie at residues 157–200 and 254–280; these read GQPH…PPGG and TSVGPNAVSPSSGPSLTADSMWRPWRN. Composition is skewed to pro residues over residues 164 to 174 and 181 to 200; these read QAPPPPPPGPG and FAPPPPLVPIPGGAAPPPGG. Positions 254–271 are enriched in polar residues; that stretch reads TSVGPNAVSPSSGPSLTA. A WRPW motif motif is present at residues 275-278; sequence WRPW.

Transcription repression requires formation of a complex with a corepressor protein of the Groucho/TLE family. Interacts with SIRT1. Interacts (via WPRW motif) with TLE1, and more weakly with TLE2. Interacts with HES6. Interacts with an FA complex, composed of FANCA, FANCF, FANCG and FANCL, but not of FANCC, nor FANCE.

The protein resides in the nucleus. Transcriptional repressor of genes that require a bHLH protein for their transcription. May act as a negative regulator of myogenesis by inhibiting the functions of MYOD1 and ASH1. Binds DNA on N-box motifs: 5'-CACNAG-3' with high affinity and on E-box motifs: 5'-CANNTG-3' with low affinity. May play a role in a functional FA core complex response to DNA cross-link damage, being required for the stability and nuclear localization of FA core complex proteins, as well as for FANCD2 monoubiquitination in response to DNA damage. This Bos taurus (Bovine) protein is Transcription factor HES-1 (HES1).